Reading from the N-terminus, the 569-residue chain is Aspartic proteinase 3 (569 aa).

Positions 1–21 (MKLKTVRSAVLSSLFASQVLG) are cleaved as a signal peptide. A propeptide spanning residues 22-67 (KIIPAANKRDDDSNSKFVKLPFHKLYGDSLENVGSDKKPEVRLLKR) is cleaved from the precursor. The 393-residue stretch at 83-475 (YSVDLEVGTP…DLENLEISMA (393 aa)) folds into the Peptidase A1 domain. Residue Asn95 is glycosylated (N-linked (GlcNAc...) asparagine). Asp101 is a catalytic residue. Residues Asn203, Asn232, Asn242, Asn245, Asn299, and Asn358 are each glycosylated (N-linked (GlcNAc...) asparagine). Residue Asp371 is part of the active site. N-linked (GlcNAc...) asparagine glycosylation is found at Asn480, Asn522, and Asn532. The GPI-anchor amidated asparagine moiety is linked to residue Asn548. The propeptide at 549–569 (VGDHIVPSLPLTLISLLFAFI) is removed in mature form.

This sequence belongs to the peptidase A1 family. Consists of an alpha and a beta subunit, which are maintained together by a disulfide bond. The zymogen is transported to the periplasm, where the propeptide is removed and the enzyme is further subjected to an internal, autocatalytic cleavage to generate an alpha/beta two-subunit endopeptidase. The proteolytic processing at the cell surface is regulated by the environmental pH. Post-translationally, extensively N-glycosylated.

It localises to the cell membrane. The catalysed reaction is Hydrolyzes various precursor proteins with Arg or Lys in P1, and commonly Arg or Lys also in P2. The P3 amino acid is usually non-polar, but otherwise additional basic amino acids are favorable in both non-prime and prime positions.. In terms of biological role, cleaves proteins C-terminally to mono- and paired-basic residues. Involved in the shedding of a subset of GPI-anchored plasma membrane proteins from the cell surface, including itself, GAS1 and MSB2. May also play a role in the maturation of GPI-mannoproteins associated with the cell wall. Can process the alpha-mating factor precursor. Required for cell wall integrity. The chain is Aspartic proteinase 3 (YPS1) from Saccharomyces cerevisiae (strain ATCC 204508 / S288c) (Baker's yeast).